The following is a 303-amino-acid chain: Acetaldehyde dehydrogenase 1 (303 aa).

The active-site Acyl-thioester intermediate is C130. Residues 161 to 169 and N272 each bind NAD(+); that span reads SVGPGTRKN.

Belongs to the acetaldehyde dehydrogenase family.

The catalysed reaction is acetaldehyde + NAD(+) + CoA = acetyl-CoA + NADH + H(+). This chain is Acetaldehyde dehydrogenase 1, found in Methylibium petroleiphilum (strain ATCC BAA-1232 / LMG 22953 / PM1).